A 213-amino-acid chain; its full sequence is Octanoyltransferase (213 aa).

The region spanning 32–207 (ENTPDEIWLV…NILALLNNPP (176 aa)) is the BPL/LPL catalytic domain. Substrate contacts are provided by residues 71 to 78 (RGGQVTYH), 138 to 140 (SLG), and 151 to 153 (GLA). Residue Cys-169 is the Acyl-thioester intermediate of the active site.

The protein belongs to the LipB family.

Its subcellular location is the cytoplasm. It carries out the reaction octanoyl-[ACP] + L-lysyl-[protein] = N(6)-octanoyl-L-lysyl-[protein] + holo-[ACP] + H(+). Its pathway is protein modification; protein lipoylation via endogenous pathway; protein N(6)-(lipoyl)lysine from octanoyl-[acyl-carrier-protein]: step 1/2. In terms of biological role, catalyzes the transfer of endogenously produced octanoic acid from octanoyl-acyl-carrier-protein onto the lipoyl domains of lipoate-dependent enzymes. Lipoyl-ACP can also act as a substrate although octanoyl-ACP is likely to be the physiological substrate. This Citrobacter koseri (strain ATCC BAA-895 / CDC 4225-83 / SGSC4696) protein is Octanoyltransferase.